Here is a 320-residue protein sequence, read N- to C-terminus: o-succinylbenzoate synthase (320 aa).

Catalysis depends on Lys-133, which acts as the Proton donor. Residues Asp-161, Glu-190, and Asp-213 each contribute to the Mg(2+) site. Lys-235 acts as the Proton acceptor in catalysis.

Belongs to the mandelate racemase/muconate lactonizing enzyme family. MenC type 1 subfamily. A divalent metal cation is required as a cofactor.

It carries out the reaction (1R,6R)-6-hydroxy-2-succinyl-cyclohexa-2,4-diene-1-carboxylate = 2-succinylbenzoate + H2O. Its pathway is quinol/quinone metabolism; 1,4-dihydroxy-2-naphthoate biosynthesis; 1,4-dihydroxy-2-naphthoate from chorismate: step 4/7. It participates in quinol/quinone metabolism; menaquinone biosynthesis. Functionally, converts 2-succinyl-6-hydroxy-2,4-cyclohexadiene-1-carboxylate (SHCHC) to 2-succinylbenzoate (OSB). The polypeptide is o-succinylbenzoate synthase (Shigella boydii serotype 18 (strain CDC 3083-94 / BS512)).